A 387-amino-acid chain; its full sequence is MTHTRVISTWTELTRDLAIYLLFTFFAIKVFKFLFSCNRTSEISSFSMATHPEALRRERILNSKLYFDVPLSKVSIIYSSSYDISFMGIEKLHPFDSSKWGRVCKFLVSDGFLEEKAIVEPLEASKIDLLVVHSENYLNSLKSSATVARITEVAPVAFFPNFLVQQKVLYPFRKQVGGTILAAKLATERGWAINIGGGFHHCTAERGGGFCAFADISLCIHFAFLRLRISRVMIIDLDAHQGNGHETDLGDDNRVYILDMYNPEIYPFDYRARRFIDQKVEVMSGTTTDEYLRKLDEALEVASRNFQPELVIYNAGTDILDGDPLGLLKISPDGITSRDEKVFRFAREKNIPLVMLTSGGYMKSSARVIADSIENLSRQGLIQTRPE.

The histone deacetylase stretch occupies residues 73-382; sequence KVSIIYSSSY…IENLSRQGLI (310 aa). The active-site Proton donor/acceptor is the His-201. Positions 238, 240, and 318 each coordinate Zn(2+).

It belongs to the histone deacetylase family. HD type 3 subfamily. It depends on Zn(2+) as a cofactor.

It localises to the nucleus. It catalyses the reaction N(6)-acetyl-L-lysyl-[histone] + H2O = L-lysyl-[histone] + acetate. Responsible for the deacetylation of lysine residues on the N-terminal part of the core histones (H2A, H2B, H3 and H4). Histone deacetylation gives a tag for epigenetic repression and plays an important role in transcriptional regulation, cell cycle progression and developmental events. Histone deacetylases act via the formation of large multiprotein complexes. This is Histone deacetylase 2 (HDA2) from Arabidopsis thaliana (Mouse-ear cress).